A 581-amino-acid polypeptide reads, in one-letter code: DNA primase (581 aa).

The CHC2-type zinc-finger motif lies at 40 to 64 (CPFHNEKTPSFTVNGEKQFYHCFGC). Residues 259 to 341 (NRLLVVEGYM…GRQLRFMFLP (83 aa)) form the Toprim domain. Mg(2+)-binding residues include glutamate 265, aspartate 309, and aspartate 311.

The protein belongs to the DnaG primase family. As to quaternary structure, monomer. Interacts with DnaB. The cofactor is Zn(2+). Mg(2+) serves as cofactor.

It carries out the reaction ssDNA + n NTP = ssDNA/pppN(pN)n-1 hybrid + (n-1) diphosphate.. In terms of biological role, RNA polymerase that catalyzes the synthesis of short RNA molecules used as primers for DNA polymerase during DNA replication. The sequence is that of DNA primase from Shigella flexneri.